The chain runs to 135 residues: L-ectoine synthase (135 aa).

It belongs to the ectoine synthase family.

The catalysed reaction is (2S)-4-acetamido-2-aminobutanoate = L-ectoine + H2O. The protein operates within amine and polyamine biosynthesis; ectoine biosynthesis; L-ectoine from L-aspartate 4-semialdehyde: step 3/3. Functionally, catalyzes the circularization of gamma-N-acetyl-alpha,gamma-diaminobutyric acid (ADABA) to ectoine (1,4,5,6-tetrahydro-2-methyl-4-pyrimidine carboxylic acid), which is an excellent osmoprotectant. This is L-ectoine synthase from Saccharopolyspora erythraea (strain ATCC 11635 / DSM 40517 / JCM 4748 / NBRC 13426 / NCIMB 8594 / NRRL 2338).